The chain runs to 533 residues: Probable protein kinase UbiB (533 aa).

A helical membrane pass occupies residues 24 to 44 (LILELPMLPWWLRLLGATLPW). Positions 126-494 (RFEREPLASA…WKGSRHDWLG (369 aa)) constitute a Protein kinase domain. Residues 132-140 (LASASVAQV) and Lys154 each bind ATP. The active-site Proton acceptor is Asp289. The chain crosses the membrane as a helical span at residues 510 to 530 (LGQQLEAWPAWVMLAGGVFLI).

Belongs to the ABC1 family. UbiB subfamily.

The protein resides in the cell inner membrane. The protein operates within cofactor biosynthesis; ubiquinone biosynthesis [regulation]. In terms of biological role, is probably a protein kinase regulator of UbiI activity which is involved in aerobic coenzyme Q (ubiquinone) biosynthesis. The polypeptide is Probable protein kinase UbiB (Pseudomonas aeruginosa (strain UCBPP-PA14)).